Consider the following 213-residue polypeptide: Protein Syd (213 aa).

The protein belongs to the Syd family.

It is found in the cell inner membrane. Interacts with the SecY protein in vivo. May bind preferentially to an uncomplexed state of SecY, thus functioning either as a chelating agent for excess SecY in the cell or as a regulatory factor that negatively controls the translocase function. This is Protein Syd from Shewanella halifaxensis (strain HAW-EB4).